The chain runs to 380 residues: Succinyl-diaminopimelate desuccinylase (380 aa).

Residue H69 participates in Zn(2+) binding. Residue D71 is part of the active site. Zn(2+) is bound at residue D102. E135 (proton acceptor) is an active-site residue. Residues E136, E164, and H353 each coordinate Zn(2+).

This sequence belongs to the peptidase M20A family. DapE subfamily. Homodimer. Requires Zn(2+) as cofactor. Co(2+) is required as a cofactor.

The enzyme catalyses N-succinyl-(2S,6S)-2,6-diaminopimelate + H2O = (2S,6S)-2,6-diaminopimelate + succinate. It participates in amino-acid biosynthesis; L-lysine biosynthesis via DAP pathway; LL-2,6-diaminopimelate from (S)-tetrahydrodipicolinate (succinylase route): step 3/3. Catalyzes the hydrolysis of N-succinyl-L,L-diaminopimelic acid (SDAP), forming succinate and LL-2,6-diaminopimelate (DAP), an intermediate involved in the bacterial biosynthesis of lysine and meso-diaminopimelic acid, an essential component of bacterial cell walls. The sequence is that of Succinyl-diaminopimelate desuccinylase from Ruegeria pomeroyi (strain ATCC 700808 / DSM 15171 / DSS-3) (Silicibacter pomeroyi).